The following is a 283-amino-acid chain: Myeloid differentiation primary response protein MyD88-B (283 aa).

Residues R27–I105 form the Death domain. The interval E106–G143 is intermediate domain. A TIR domain is found at E147–L281.

The protein resides in the cytoplasm. In terms of biological role, adapter protein involved in the Toll-like receptor and IL-1 receptor signaling pathway in the innate immune response. Activates expression of target genes in the Spemann organizer region during early embryonic development. Is required for normal axis formation. This chain is Myeloid differentiation primary response protein MyD88-B (myd88-b), found in Xenopus laevis (African clawed frog).